The primary structure comprises 357 residues: Peptide chain release factor 1 (357 aa).

Position 234 is an N5-methylglutamine (glutamine 234).

It belongs to the prokaryotic/mitochondrial release factor family. Methylated by PrmC. Methylation increases the termination efficiency of RF1.

Its subcellular location is the cytoplasm. Functionally, peptide chain release factor 1 directs the termination of translation in response to the peptide chain termination codons UAG and UAA. The protein is Peptide chain release factor 1 of Arthrobacter sp. (strain FB24).